The chain runs to 2635 residues: Protein unc-79 homolog (2635 aa).

S754 and S758 each carry phosphoserine. 6 disordered regions span residues 907 to 929 (GPEG…NCTE), 1538 to 1575 (IAQR…DARR), 1607 to 1678 (LIDL…SVLS), 1693 to 1832 (SKDF…FKIQ), 1863 to 1909 (LGEQ…TQYR), and 1929 to 1950 (LEHQ…IQPG). Over residues 1666–1678 (SSPSVPSHPSVLS) the composition is skewed to low complexity. Residues 1699–1713 (KDSGNNQSAGNTDSA) are compositionally biased toward polar residues. A compositionally biased stretch (basic and acidic residues) spans 1761–1775 (LDDHPDPGTEGEKPG). Polar residues-rich tracts occupy residues 1897-1909 (ETSS…TQYR) and 1929-1947 (LEHQ…TEQI). A run of 2 helical transmembrane segments spans residues 2223–2243 (LLSF…ELCG) and 2466–2486 (VLHM…TVYC).

It belongs to the unc-79 family. As to quaternary structure, NALCN complex consists of NALCN and auxiliary subunits, UNC79, UNC80 and NACL1. These auxiliary subunits are essential for the NALCN channel function. UNC80 bridges NALCN to UNC79.

The protein localises to the cell membrane. In terms of biological role, auxiliary subunit of the NALCN sodium channel complex, a voltage-gated ion channel responsible for the resting Na(+) permeability that controls neuronal excitability. Activated by neuropeptides substance P, neurotensin, and extracellular calcium that regulates neuronal excitability by controlling the sizes of NALCN-dependent sodium-leak current. The protein is Protein unc-79 homolog (UNC79) of Homo sapiens (Human).